The chain runs to 495 residues: Aspartyl/glutamyl-tRNA(Asn/Gln) amidotransferase subunit B (495 aa).

Belongs to the GatB/GatE family. GatB subfamily. Heterotrimer of A, B and C subunits.

It carries out the reaction L-glutamyl-tRNA(Gln) + L-glutamine + ATP + H2O = L-glutaminyl-tRNA(Gln) + L-glutamate + ADP + phosphate + H(+). The enzyme catalyses L-aspartyl-tRNA(Asn) + L-glutamine + ATP + H2O = L-asparaginyl-tRNA(Asn) + L-glutamate + ADP + phosphate + 2 H(+). Allows the formation of correctly charged Asn-tRNA(Asn) or Gln-tRNA(Gln) through the transamidation of misacylated Asp-tRNA(Asn) or Glu-tRNA(Gln) in organisms which lack either or both of asparaginyl-tRNA or glutaminyl-tRNA synthetases. The reaction takes place in the presence of glutamine and ATP through an activated phospho-Asp-tRNA(Asn) or phospho-Glu-tRNA(Gln). This Crocosphaera subtropica (strain ATCC 51142 / BH68) (Cyanothece sp. (strain ATCC 51142)) protein is Aspartyl/glutamyl-tRNA(Asn/Gln) amidotransferase subunit B.